The sequence spans 185 residues: Elongation factor P (185 aa).

It belongs to the elongation factor P family.

The protein localises to the cytoplasm. The protein operates within protein biosynthesis; polypeptide chain elongation. In terms of biological role, involved in peptide bond synthesis. Stimulates efficient translation and peptide-bond synthesis on native or reconstituted 70S ribosomes in vitro. Probably functions indirectly by altering the affinity of the ribosome for aminoacyl-tRNA, thus increasing their reactivity as acceptors for peptidyl transferase. The polypeptide is Elongation factor P (Cyanothece sp. (strain PCC 7425 / ATCC 29141)).